The primary structure comprises 424 residues: G1/S-specific cyclin-E (424 aa).

The segment at 1-25 (MSRRSGRLQSRQDNQPLTECISDEN) is disordered. Polar residues predominate over residues 7 to 17 (RLQSRQDNQPL). T411 carries the post-translational modification Phosphothreonine.

The protein belongs to the cyclin family. Cyclin E subfamily. As to quaternary structure, interacts with a member of the CDK2/CDK protein kinases to form a serine/threonine kinase holoenzyme complex. The cyclin subunit imparts substrate specificity to the complex.

It is found in the nucleus. In terms of biological role, essential for the control of the cell cycle at the G1/S (start) transition. This chain is G1/S-specific cyclin-E (CYCE), found in Hemicentrotus pulcherrimus (Sea urchin).